The sequence spans 218 residues: GTP cyclohydrolase 1 (218 aa).

Zn(2+)-binding residues include C111, H114, and C182.

It belongs to the GTP cyclohydrolase I family. Toroid-shaped homodecamer, composed of two pentamers of five dimers.

The enzyme catalyses GTP + H2O = 7,8-dihydroneopterin 3'-triphosphate + formate + H(+). Its pathway is cofactor biosynthesis; 7,8-dihydroneopterin triphosphate biosynthesis; 7,8-dihydroneopterin triphosphate from GTP: step 1/1. This is GTP cyclohydrolase 1 from Buchnera aphidicola subsp. Schizaphis graminum (strain Sg).